The sequence spans 163 residues: Transcription antitermination protein NusB (163 aa).

This sequence belongs to the NusB family.

Involved in transcription antitermination. Required for transcription of ribosomal RNA (rRNA) genes. Binds specifically to the boxA antiterminator sequence of the ribosomal RNA (rrn) operons. In Mycolicibacterium vanbaalenii (strain DSM 7251 / JCM 13017 / BCRC 16820 / KCTC 9966 / NRRL B-24157 / PYR-1) (Mycobacterium vanbaalenii), this protein is Transcription antitermination protein NusB.